The chain runs to 155 residues: Nucleosome assembly protein 1-like 5 (155 aa).

The span at 1-16 shows a compositional bias: basic and acidic residues; the sequence is MADPEKQGPAESRAED. A disordered region spans residues 1-60; sequence MADPEKQGPAESRAEDEVMEGAQGGEDAATGDSATAPAAEEPQAPAENAPKPKNDFIESL. A compositionally biased stretch (low complexity) spans 27 to 49; the sequence is DAATGDSATAPAAEEPQAPAENA. Residues 68-94 adopt a coiled-coil conformation; it reads VLALKKLQKRCDKIEAKFDKEFQALEK. Residues 119-155 are disordered; the sequence is WTLEGEDDEDDEEEEDEEEEEEEAAAGATGGPDSAEK. Residues 122–142 are compositionally biased toward acidic residues; the sequence is EGEDDEDDEEEEDEEEEEEEA.

It belongs to the nucleosome assembly protein (NAP) family.

The protein localises to the nucleus. This Rattus norvegicus (Rat) protein is Nucleosome assembly protein 1-like 5 (Nap1l5).